The sequence spans 229 residues: uncharacterized protein (229 aa).

This is an uncharacterized protein from Ureaplasma parvum serovar 3 (strain ATCC 700970).